Reading from the N-terminus, the 603-residue chain is Elongation factor 4 (603 aa).

Residues 7–189 (SRLRNFCIIA…AVVDRIPSPK (183 aa)) form the tr-type G domain. GTP-binding positions include 19-24 (DHGKST) and 136-139 (NKVD).

This sequence belongs to the TRAFAC class translation factor GTPase superfamily. Classic translation factor GTPase family. LepA subfamily.

The protein localises to the cell inner membrane. The enzyme catalyses GTP + H2O = GDP + phosphate + H(+). Functionally, required for accurate and efficient protein synthesis under certain stress conditions. May act as a fidelity factor of the translation reaction, by catalyzing a one-codon backward translocation of tRNAs on improperly translocated ribosomes. Back-translocation proceeds from a post-translocation (POST) complex to a pre-translocation (PRE) complex, thus giving elongation factor G a second chance to translocate the tRNAs correctly. Binds to ribosomes in a GTP-dependent manner. In Prochlorococcus marinus (strain NATL2A), this protein is Elongation factor 4.